The sequence spans 792 residues: Phenylalanine--tRNA ligase beta subunit (792 aa).

Residues 39–147 enclose the tRNA-binding domain; it reads GESLGQVVVA…DDAPVGQALA (109 aa). The B5 domain occupies 400–475; that stretch reads PQPVHIRLRR…RIHGYDRVPT (76 aa). Residues Asp-453, Asp-459, Glu-462, and Glu-463 each contribute to the Mg(2+) site. The region spanning 698–791 is the FDX-ACB domain; the sequence is SRFPSVRRDL…IEREHRARIR (94 aa).

This sequence belongs to the phenylalanyl-tRNA synthetase beta subunit family. Type 1 subfamily. As to quaternary structure, tetramer of two alpha and two beta subunits. Mg(2+) serves as cofactor.

The protein resides in the cytoplasm. It catalyses the reaction tRNA(Phe) + L-phenylalanine + ATP = L-phenylalanyl-tRNA(Phe) + AMP + diphosphate + H(+). This Xanthomonas axonopodis pv. citri (strain 306) protein is Phenylalanine--tRNA ligase beta subunit.